Here is a 112-residue protein sequence, read N- to C-terminus: Putative pterin-4-alpha-carbinolamine dehydratase (112 aa).

It belongs to the pterin-4-alpha-carbinolamine dehydratase family.

The catalysed reaction is (4aS,6R)-4a-hydroxy-L-erythro-5,6,7,8-tetrahydrobiopterin = (6R)-L-erythro-6,7-dihydrobiopterin + H2O. The protein is Putative pterin-4-alpha-carbinolamine dehydratase of Shewanella amazonensis (strain ATCC BAA-1098 / SB2B).